A 685-amino-acid polypeptide reads, in one-letter code: MDFREILMIASKGQGVNNVPKRYSLAVGPPKKDPKVKGVQSAAVQAFLKRKEEELRRKALEEKRRKEELVKKRIELKHDKKARAMAKRTKDNFHGYNGIPIEEKSKKRQATESHTSQGTDREYEMEEENEFLEYNHAESEQEYEEEQEPPKVESKPKVPLKSAPPPMNFTDLLRLAEKKQFEPVEIKVVKKSEERPMTAEELREREFLERKHRRKKLETDGKLPPTVSKKAPSQKESVGTKLSKGSGDRHPSSKGMPLPHAEKKSRPSMANEKHLALSSSKSMPGERIKAGSGNSSQPSLREGHDKPVFNGAGKPHSSTSSPSVPKTSASRTQKSAVEHKAKKSLSHPSHSRPGPMVTPHNKAKSPGVRQPGSSSSSAPGQPSTGVARPTVSSGPVPRRQNGSSSSGPERSISGSKKPTNDSNPSRRTVSGTCGPGQPASSSGGPGRPISGSVSSARPLGSSRGPGRPVSSPHELRRPVSGLGPPGRSVSGPGRSISGSIPAGRTVSNSVPGRPVSSLGPGQTVSSSGPTIKPKCTVVSETISSKNIISRSSNGQMNGMKPPLSGYRAAQGPQRLPFPTGYKRQREYEEEDDDDDEYDSEMEDFIEDEGEPQEEISKHIREIFGYDRKKYKDESDYALRYMESSWKEQQKEEAKSLRLGMQEDLEEMRREEEEMQRRRAKKLKRR.

Residues 1 to 570 (MDFREILMIA…PPLSGYRAAQ (570 aa)) are important for interaction with DNA. A Glycyl lysine isopeptide (Lys-Gly) (interchain with G-Cter in SUMO2) cross-link involves residue K37. Positions 45-81 (QAFLKRKEEELRRKALEEKRRKEELVKKRIELKHDKK) form a coiled coil. Residues 79 to 168 (DKKARAMAKR…PLKSAPPPMN (90 aa)) form a disordered region. Residues 101–111 (IEEKSKKRQAT) show a composition bias toward basic and acidic residues. Positions 123 to 148 (YEMEEENEFLEYNHAESEQEYEEEQE) form a coiled coil. K187 is covalently cross-linked (Glycyl lysine isopeptide (Lys-Gly) (interchain with G-Cter in SUMO2)). 2 stretches are compositionally biased toward basic and acidic residues: residues 188-209 (VVKK…EFLE) and 260-275 (HAEK…EKHL). Disordered stretches follow at residues 188–615 (VVKK…QEEI) and 644–685 (SWKE…LKRR). S278 is modified (phosphoserine). 3 stretches are compositionally biased toward low complexity: residues 317–330 (SSTS…TSAS), 365–385 (SPGV…PSTG), and 402–415 (GSSS…ISGS). Positions 416-431 (KKPTNDSNPSRRTVSG) are enriched in polar residues. Positions 435 to 501 (PGQPASSSGG…PGRSISGSIP (67 aa)) are enriched in low complexity. S471 is modified (phosphoserine). The segment covering 519–529 (GPGQTVSSSGP) has biased composition (polar residues). Positions 542-553 (ISSKNIISRSSN) are enriched in low complexity. Residues 571–685 (GPQRLPFPTG…RRRAKKLKRR (115 aa)) form an important for interaction with histones region. The residue at position 582 (K582) is an N6-acetyllysine. The span at 587–613 (YEEEDDDDDEYDSEMEDFIEDEGEPQE) shows a compositional bias: acidic residues. S599 bears the Phosphoserine mark. 2 stretches are compositionally biased toward basic and acidic residues: residues 644 to 655 (SWKEQQKEEAKS) and 666 to 676 (EMRREEEEMQR). Positions 645 to 685 (WKEQQKEEAKSLRLGMQEDLEEMRREEEEMQRRRAKKLKRR) form a coiled coil.

This sequence belongs to the SPT2 family. Interacts with histones. Interacts with a heterotetrameric complex formed by histone H3 and H4, especially when the histone tetramer is not bound to DNA. Interacts with histone H3.3.

Its subcellular location is the nucleus. It is found in the nucleolus. Functionally, histone chaperone that stabilizes pre-existing histone tetramers and regulates replication-independent histone exchange on chromatin. Required for normal chromatin refolding in the coding region of transcribed genes, and for the suppression of spurious transcription. Binds DNA and histones and promotes nucleosome assembly (in vitro). Facilitates formation of tetrameric histone complexes containing histone H3 and H4. Modulates RNA polymerase 1-mediated transcription. Binds DNA, with a preference for branched DNA species, such as Y-form DNA and Holliday junction DNA. This is Protein SPT2 homolog (SPTY2D1) from Homo sapiens (Human).